Here is a 46-residue protein sequence, read N- to C-terminus: U-limacoditoxin(6)-Dv61 (46 aa).

Residues 1–19 form the signal peptide; it reads MSKLLVLLMTTALATLAQA.

The protein belongs to the limacoditoxin-6 family. In terms of tissue distribution, expressed by the venom secretory cell of the spine. The spine is a cuticular structure containing a single large nucleated venom-secreting cell at its base. It is an independent unit capable of producing, storing and injecting venom. On the back of D.vulnerans caterpillars, spines are grouped together by 50 to 100 to form scoli, of which there are eight in D.vulnerans.

It localises to the secreted. Probable toxin. Does not show insecticidal, antimicrobial and antiparasitic activities. Does not induce increase in intracellular calcium in mouse DRG neurons, suggesting that it does not induce pain. The sequence is that of U-limacoditoxin(6)-Dv61 from Doratifera vulnerans (Mottled cup moth).